Reading from the N-terminus, the 82-residue chain is Myosin light chain alkali (82 aa).

The EF-hand domain occupies 7-42 (GCYEDFIECLKLYDKEENGTMMLAELQHALLALGES).

Myosin is a hexamer of 2 heavy chains and 4 light chains.

This chain is Myosin light chain alkali (Mlc1), found in Drosophila mauritiana (Fruit fly).